The primary structure comprises 287 residues: Protein REVEILLE 3 (287 aa).

The region spanning 56–110 (TITKSRENWTEQEHDKFLEALHLFDRDWKKIKAFVGSKTVIQIRSHAQKYFLKVQ) is the HTH myb-type domain. A DNA-binding region (H-T-H motif) is located at residues 83–106 (WKKIKAFVGSKTVIQIRSHAQKYF). The segment at 111–135 (KNGTKEHLPPPRPKRKANHPYPQKA) is disordered.

The protein resides in the nucleus. In terms of biological role, probable transcription factor. This Arabidopsis thaliana (Mouse-ear cress) protein is Protein REVEILLE 3 (RVE3).